The following is a 141-amino-acid chain: Putative pre-16S rRNA nuclease (141 aa).

It belongs to the YqgF nuclease family.

It localises to the cytoplasm. Could be a nuclease involved in processing of the 5'-end of pre-16S rRNA. This is Putative pre-16S rRNA nuclease from Cupriavidus pinatubonensis (strain JMP 134 / LMG 1197) (Cupriavidus necator (strain JMP 134)).